The primary structure comprises 350 residues: tRNA pseudouridine synthase D (350 aa).

D79 serves as the catalytic Nucleophile. One can recognise a TRUD domain in the interval 154–306; the sequence is GAPNYYGPQR…EQERRPIVLY (153 aa).

Belongs to the pseudouridine synthase TruD family.

It carries out the reaction uridine(13) in tRNA = pseudouridine(13) in tRNA. In terms of biological role, responsible for synthesis of pseudouridine from uracil-13 in transfer RNAs. In Pseudoalteromonas atlantica (strain T6c / ATCC BAA-1087), this protein is tRNA pseudouridine synthase D.